The primary structure comprises 251 residues: Homeobox protein notochord (251 aa).

The segment covering 1–14 (MPSPRPRGSPPPAP) has biased composition (pro residues). Residues 1–47 (MPSPRPRGSPPPAPSGSRVRPPRSGRSPAPRSPTGPNTPRAPGRFES) are disordered. Low complexity predominate over residues 15–35 (SGSRVRPPRSGRSPAPRSPTG). A DNA-binding region (homeobox) is located at residues 156–215 (QKRVRTMFNLEQLEELEKVFAKQHNLVGKKRAQLAARLKLTENQVRVWFQNRRVKYQKQQ). A compositionally biased stretch (low complexity) spans 224–242 (AEAASLDEPSSSSIASIQS). The tract at residues 224–251 (AEAASLDEPSSSSIASIQSDDAESGVDG) is disordered.

The protein resides in the nucleus. In terms of biological role, transcription regulator acting downstream of both FOXA2 and Brachyury (T) during notochord development. Required for node morphogenesis. Is essential for cilia formation in the posterior notochord (PNC) and for left-right patterning; acts upstream of FOXJ1 and RFX3 in this process and is required for the expression of various components important for axonemal assembly and function. Plays a role in regulating axial versus paraxial cell fate. Activates the transcription of ciliary proteins C11orf97 homolog, FAM183B and SPACA9 in the embryonic ventral node. This Homo sapiens (Human) protein is Homeobox protein notochord (NOTO).